Consider the following 812-residue polypeptide: Xaa-Pro dipeptidyl-peptidase (812 aa).

Catalysis depends on charge relay system residues serine 372, aspartate 492, and histidine 523.

It belongs to the peptidase S15 family. As to quaternary structure, homodimer.

The protein resides in the cytoplasm. It carries out the reaction Hydrolyzes Xaa-Pro-|- bonds to release unblocked, N-terminal dipeptides from substrates including Ala-Pro-|-p-nitroanilide and (sequentially) Tyr-Pro-|-Phe-Pro-|-Gly-Pro-|-Ile.. Its function is as follows. Removes N-terminal dipeptides sequentially from polypeptides having unsubstituted N-termini provided that the penultimate residue is proline. The polypeptide is Xaa-Pro dipeptidyl-peptidase (Pediococcus pentosaceus (strain ATCC 25745 / CCUG 21536 / LMG 10740 / 183-1w)).